A 246-amino-acid polypeptide reads, in one-letter code: MAGHSKWANTRHRKAAQDAKRGKIFTKIIRELVTAAKLGGGDPDANPRLRAAIDKALSNNMTRDTLNRAIARGVGGDDDANMETIIYEGYGPGGTAIMIECLSDNRNRTVAEVRHAFSKCGGNLGTDGSVAYLFSKKGVISFEKGDEDTIMEAALEAGAEDVVTYDDGAIDVYTAWEEMGKVRDALEAAGLKADSAEVSMIPSTKADMDAETAPKLMRLIDMLEDCDDVQEVYHNGEISDEVAATL.

The interval 1-20 is disordered; sequence MAGHSKWANTRHRKAAQDAK.

Belongs to the TACO1 family.

The protein localises to the cytoplasm. The sequence is that of Probable transcriptional regulatory protein YebC from Escherichia coli O6:K15:H31 (strain 536 / UPEC).